A 181-amino-acid chain; its full sequence is Photosystem I assembly protein Ycf4 (181 aa).

2 helical membrane-spanning segments follow: residues Tyr19–Phe41 and Ile61–Thr83.

This sequence belongs to the Ycf4 family.

It localises to the plastid. Its subcellular location is the chloroplast thylakoid membrane. Its function is as follows. Seems to be required for the assembly of the photosystem I complex. The sequence is that of Photosystem I assembly protein Ycf4 from Guillardia theta (Cryptophyte).